Reading from the N-terminus, the 213-residue chain is NADH dehydrogenase [ubiquinone] iron-sulfur protein 7, mitochondrial (213 aa).

The transit peptide at 1 to 38 directs the protein to the mitochondrion; the sequence is MAVLSAPGLRGFRILGLRSSVGPAVQARGVHQSVATDG. The disordered stretch occupies residues 31 to 53; that stretch reads HQSVATDGPSSTQPALPKARAVA. Residues 33–44 show a composition bias toward polar residues; it reads SVATDGPSSTQP. 2 residues coordinate [4Fe-4S] cluster: Cys-88 and Cys-89. The residue at position 111 (Arg-111) is a Hydroxyarginine. Residues Cys-153 and Cys-183 each contribute to the [4Fe-4S] cluster site.

The protein belongs to the complex I 20 kDa subunit family. As to quaternary structure, core subunit of respiratory chain NADH dehydrogenase (Complex I) which is composed of 45 different subunits. This is a component of the iron-sulfur (IP) fragment of the enzyme. Requires [4Fe-4S] cluster as cofactor. In terms of processing, hydroxylated at Arg-111 by NDUFAF5 early in the pathway of assembly of complex I, before the formation of the juncture between peripheral and membrane arms.

Its subcellular location is the mitochondrion inner membrane. It catalyses the reaction a ubiquinone + NADH + 5 H(+)(in) = a ubiquinol + NAD(+) + 4 H(+)(out). Functionally, core subunit of the mitochondrial membrane respiratory chain NADH dehydrogenase (Complex I) which catalyzes electron transfer from NADH through the respiratory chain, using ubiquinone as an electron acceptor. Essential for the catalytic activity of complex I. The polypeptide is NADH dehydrogenase [ubiquinone] iron-sulfur protein 7, mitochondrial (NDUFS7) (Homo sapiens (Human)).